The chain runs to 576 residues: Arginine--tRNA ligase (576 aa).

The 'HIGH' region motif lies at 132-142; sequence ANPTGPMHIGH.

Belongs to the class-I aminoacyl-tRNA synthetase family. As to quaternary structure, monomer.

Its subcellular location is the cytoplasm. It carries out the reaction tRNA(Arg) + L-arginine + ATP = L-arginyl-tRNA(Arg) + AMP + diphosphate. The chain is Arginine--tRNA ligase from Ehrlichia ruminantium (strain Welgevonden).